A 112-amino-acid chain; its full sequence is UPF0145 protein LAF_1635 (112 aa).

Belongs to the UPF0145 family.

The chain is UPF0145 protein LAF_1635 from Limosilactobacillus fermentum (strain NBRC 3956 / LMG 18251) (Lactobacillus fermentum).